A 367-amino-acid chain; its full sequence is Phosphoribosylaminoimidazole-succinocarboxamide synthase (367 aa).

Belongs to the SAICAR synthetase family.

It carries out the reaction 5-amino-1-(5-phospho-D-ribosyl)imidazole-4-carboxylate + L-aspartate + ATP = (2S)-2-[5-amino-1-(5-phospho-beta-D-ribosyl)imidazole-4-carboxamido]succinate + ADP + phosphate + 2 H(+). It functions in the pathway purine metabolism; IMP biosynthesis via de novo pathway; 5-amino-1-(5-phospho-D-ribosyl)imidazole-4-carboxamide from 5-amino-1-(5-phospho-D-ribosyl)imidazole-4-carboxylate: step 1/2. This Shewanella baltica (strain OS185) protein is Phosphoribosylaminoimidazole-succinocarboxamide synthase.